The following is a 513-amino-acid chain: uncharacterized protein (513 aa).

The CYTH domain occupies 11 to 219; it reads HLEVERKFDV…SKLARVLGAT (209 aa). Residues 228 to 506 form the CHAD domain; it reads PQPPADPVHR…LEAALRKLDK (279 aa).

This is an uncharacterized protein from Mycobacterium tuberculosis (strain ATCC 25618 / H37Rv).